Reading from the N-terminus, the 224-residue chain is Urease accessory protein UreG (224 aa).

Basic residues predominate over residues 1-20 (MATHSHPHSHTVPARPRRVR). Positions 1-25 (MATHSHPHSHTVPARPRRVRKPGEP) are disordered. 32–39 (GPVGSGKT) provides a ligand contact to GTP.

This sequence belongs to the SIMIBI class G3E GTPase family. UreG subfamily. In terms of assembly, homodimer. UreD, UreF and UreG form a complex that acts as a GTP-hydrolysis-dependent molecular chaperone, activating the urease apoprotein by helping to assemble the nickel containing metallocenter of UreC. The UreE protein probably delivers the nickel.

It is found in the cytoplasm. Facilitates the functional incorporation of the urease nickel metallocenter. This process requires GTP hydrolysis, probably effectuated by UreG. In Mycobacterium bovis (strain ATCC BAA-935 / AF2122/97), this protein is Urease accessory protein UreG.